The primary structure comprises 347 residues: Putative [LysW]-L-2-aminoadipate/[LysW]-L-glutamate phosphate reductase (347 aa).

9 to 12 lines the NADP(+) pocket; the sequence is SGYI. Residue C149 is part of the active site. N314 contributes to the NADP(+) binding site.

It belongs to the NAGSA dehydrogenase family. Type 1 subfamily. LysY sub-subfamily.

It localises to the cytoplasm. It catalyses the reaction [amino-group carrier protein]-C-terminal-N-(1-carboxy-5-oxopentan-1-yl)-L-glutamine + phosphate + NADP(+) = [amino-group carrier protein]-C-terminal-N-(1-carboxy-5-phosphooxy-5-oxopentan-1-yl)-L-glutamine + NADPH + H(+). It carries out the reaction [amino-group carrier protein]-C-terminal-gamma-(L-glutamyl-5-semialdehyde)-L-glutamate + phosphate + NADP(+) = [amino-group carrier protein]-C-terminal-gamma-(5-phospho-L-glutamyl)-L-glutamate + NADPH + H(+). It participates in amino-acid biosynthesis; L-lysine biosynthesis via AAA pathway; L-lysine from L-alpha-aminoadipate (Thermus route): step 3/5. Its pathway is amino-acid biosynthesis; L-arginine biosynthesis. Functionally, involved in both the arginine and lysine biosynthetic pathways. The sequence is that of Putative [LysW]-L-2-aminoadipate/[LysW]-L-glutamate phosphate reductase from Picrophilus torridus (strain ATCC 700027 / DSM 9790 / JCM 10055 / NBRC 100828 / KAW 2/3).